A 1331-amino-acid chain; its full sequence is MASTSSSRASSSSSSSSTPSIPRTITYDVFLSFRGEDTRFNFTDHLYSALGRRGIRTFRDDKLRRGEAIAPELLKAIEESRSSVIVFSENYARSRWCLDELVKIMECHKDKKDPGHAVFPIFYHVDPSHVRKQEGSFGEAFAGYGENLKDKIPRWRTALTEAANLSGWPLQDGYESNQIKEITDSIFRRLKCKRLDAGANLVGIDSHVKEMIWRLHMESSDVRMVGMYGVGGIGKTTIAKVIYNELSREFEYMSFLENIREKFNTQGVSPLQNQLLDDILKGEGSQNINSVAHGASMIKDILSSKIVFIVLDDVDDQSQLEYLLRHREWLGEGSRVIITTRNKHVLDVQKVDDLYEVKGLNFEEACELFSLYAFEQNLPKSDYRNLSHRVVGYCQGLPLALKVLGCLLLKKTIPEWESELRKLDREPEAEILSVLKRSYDGLGRTEKSIFLDVACFFKGEDRDFVSKILDACDFHAEIGIKNLNDKCLITLQYNRIRMHDLIQQMGWEIVREKFPDEPNKWSRLWDTCDFERALTAYKGIKRVETISLDLSKLKRVCSNSNAFAKMTRLRLLKVQSSLDIDFEPEYIDADDKVELYDVVMKNASKMRLGRGFKFPSYELRYLRWDGYPLDFLPSNFDGGKLVELHLKCSNIKQLRLGNKDLEMLKVIDLSYSRKLSQMSEFSSMPNLERLFLRGCVSLIDIHPSVGNMKKLTTLSLKSCKKLKNLPDSIGDLESLEILDLAYCSKFEKFPEKGGNMKSLTELDLQNTAIKDLPDSIGDLESLKYLDLSDCSKFEKFPEKGGNMKSLRELDLRNTAIKDLPDSIRDLESLERLYLSYCSKFEKFPEKGGNMKSLMELDLQNTAIKDLPDSIGDLESLKYLDLSNCSKFEKFPEKGGNMKSLTELFLENTAIKDLPDSIGDLESLVSLNLSDCSKFEKFPEKGGNMKSLNWLYLNNTAIKDLPDSIGDLESLMRLYLSNSSKFEKLPEKVGNMKSLELLDLRNTAIKDLPDSIGDLEPLEKLSLSNCPKFEVLPLSLKAIDAHLCTSKEDLSRLLWLCHRNWLKSTTEEFDRWQLSAFIPESSGIPEWITYQNLGSEVTEKLPINWCEDPDFPGFVLSCLYRPSDYSSAYNFCHDFKCELNLHGNGFTFTDECSHSCWCDCHVNFKDSRDLVCVYWYPKTAIPEEDHHKYTHINASFTHRFEGHPFFCEDIKKIKCGINVIFLGDQRNHMPMLEHPQNSGDNGSALQDANGNVHGANQDDEHYHIPTLGLLGNFHDNGSAVLEDTLGNRKRRRDDSLPDVVEEPHYKKIGSHPTPISCFELHHQYQSEQNHMW.

Residues 1–20 (MASTSSSRASSSSSSSSTPS) are disordered. One can recognise a TIR domain in the interval 25-190 (ITYDVFLSFR…EITDSIFRRL (166 aa)). NAD(+) is bound by residues 34–39 (RGEDTR) and glycine 66. Glutamate 100 is an active-site residue. The NB-ARC domain occupies 206–434 (SHVKEMIWRL…REPEAEILSV (229 aa)). 20 LRR repeats span residues 429–452 (AEIL…IFLD), 480–509 (IKNL…GWEI), 540–565 (IKRV…AFAK), 616–638 (SYEL…NFDG), 648–673 (CSNI…SYSR), 684–708 (MPNL…VGNM), 709–732 (KKLT…IGDL), 734–756 (SLEI…GGNM), 757–779 (KSLT…IGDL), 781–803 (SLKY…GGNM), 804–826 (KSLR…IRDL), 828–850 (SLER…GGNM), 851–873 (KSLM…IGDL), 875–897 (SLKY…GGNM), 898–920 (KSLT…IGDL), 922–944 (SLVS…GGNM), 945–967 (KSLN…IGDL), 969–991 (SLMR…VGNM), 992–1014 (KSLE…IGDL), and 1017–1040 (LEKL…AIDA). The Nuclear localization signal signature appears at 1287 to 1291 (RKRRR).

This sequence belongs to the disease resistance TIR-NB-LRR family.

It localises to the nucleus. The protein resides in the cytoplasm. It catalyses the reaction NAD(+) + H2O = ADP-D-ribose + nicotinamide + H(+). The catalysed reaction is NADP(+) + H2O = ADP-D-ribose 2'-phosphate + nicotinamide + H(+). Disease resistance (R) protein that confers resistance to multiple powdery and downy mildew by promoting cell death. Acts as a NAD(+) hydrolase (NADase): in response to activation, catalyzes cleavage of NAD(+) into ADP-D-ribose (ADPR) and nicotinamide; NAD(+) cleavage triggering a defense system that promotes cell death. Also able to hydrolyze NADP(+), but not other NAD(+)-related molecules. The polypeptide is Disease resistance protein RUN1 (Vitis rotundifolia (Muscadine grape)).